Reading from the N-terminus, the 2696-residue chain is Protein ILITYHIA (2696 aa).

A compositionally biased stretch (polar residues) spans 1–18 (MSYSMVNASSAVSSPETA). The segment at 1–26 (MSYSMVNASSAVSSPETAKNSDEPPP) is disordered. HEAT repeat units follow at residues 162–204 (DIAP…MKTF), 253–290 (STQA…IYSL), 303–340 (KDSP…DVLN), 364–400 (EFQT…IDLS), 401–438 (KYAL…KSSN), 487–525 (SLSR…RSSV), 526–562 (AIQP…NPDT), 564–601 (SQIS…SKIA), and 642–677 (VVCV…FLLC). Residues 901–941 (KQEPSSNHSLKKGLASRETANSGRRDTAKLTKKADKGKTAK) form a disordered region. The segment covering 923 to 941 (GRRDTAKLTKKADKGKTAK) has biased composition (basic and acidic residues). 18 HEAT repeats span residues 985–1021 (HSQL…CTVQ), 1082–1118 (DTFT…GLQA), 1188–1225 (HDLG…ESPS), 1273–1311 (KDLP…KHGK), 1315–1355 (SLLF…HLAR), 1358–1395 (PKVH…SKQE), 1397–1433 (APAL…GFGI), 1436–1474 (LKKY…KLGK), 1478–1515 (PYVI…QLSA), 1516–1553 (YGVK…CAPQ), 1564–1600 (PKLT…VIKN), 1601–1638 (PEIS…NSVD), 1640–1677 (PSLA…LVTE), 1683–1720 (PYIG…GMGE), 1722–1759 (NFPD…ALGT), 1761–1797 (YFEN…SLGA), 1801–1838 (KYLQ…HHAT), and 1840–1876 (SLPL…KVAG). Residue serine 1887 is modified to Phosphoserine. HEAT repeat units lie at residues 1908–1945 (DKRN…NTPK), 1949–1986 (EIMP…KLGE), 1988–2024 (VLPL…SAGR), 2029–2066 (SFMD…SAGL), 2067–2102 (QAMD…VRTA), 2104–2137 (VLPH…AGFN), 2138–2175 (THLG…VIDE), 2177–2213 (GVET…SSKL), 2217–2254 (DEAP…SVPK), 2258–2292 (PSYI…LCLP), 2293–2330 (KSLK…VTSE), 2335–2373 (EFVI…RGGM), 2377–2414 (PFLP…LSTR), 2416–2450 (DPLV…HAGK), 2455–2492 (AVRV…YLEA), 2494–2530 (QLSV…HNPS), 2536–2573 (SLFS…KQLA), 2580–2617 (KVVI…DNPS), and 2620–2658 (MANI…LTKG).

Belongs to the GCN1 family.

In terms of biological role, involved in immunity against bacterial infection and in non-host resistance. Required for embryo development. Required for systemic acquired resistance, but functions in an salicylic acid-independent manner. Required for bacterium-triggered stomatal closure response. This Arabidopsis thaliana (Mouse-ear cress) protein is Protein ILITYHIA.